Consider the following 303-residue polypeptide: Inosose dehydratase (303 aa).

It belongs to the IolE/MocC family. The cofactor is glutathione. Requires Co(2+) as cofactor. It depends on Mn(2+) as a cofactor.

It carries out the reaction scyllo-inosose = 3D-3,5/4-trihydroxycyclohexane-1,2-dione + H2O. The protein operates within polyol metabolism; myo-inositol degradation into acetyl-CoA; acetyl-CoA from myo-inositol: step 2/7. In terms of biological role, catalyzes the dehydration of inosose (2-keto-myo-inositol, 2KMI or 2,4,6/3,5-pentahydroxycyclohexanone) to 3D-(3,5/4)-trihydroxycyclohexane-1,2-dione (D-2,3-diketo-4-deoxy-epi-inositol). In Halalkalibacterium halodurans (strain ATCC BAA-125 / DSM 18197 / FERM 7344 / JCM 9153 / C-125) (Bacillus halodurans), this protein is Inosose dehydratase.